A 57-amino-acid polypeptide reads, in one-letter code: Large ribosomal subunit protein bL32 (57 aa).

The segment at Met-1 to Lys-23 is disordered.

It belongs to the bacterial ribosomal protein bL32 family.

In Trichormus variabilis (strain ATCC 29413 / PCC 7937) (Anabaena variabilis), this protein is Large ribosomal subunit protein bL32.